The chain runs to 438 residues: MPKLQGFEFWSRALGGARHVVAPMVDQSELAWRLLSRRHGAQLCYTPMLHAQVFVRDANYRKENLYCDVCPEDRPLIVQFCANDPEVFVQAALLAQDYCDAIDLNLGCPQMIAKRGRYGAFLQEEWDLLQRMILLAHERLSVPVTCKIRVFPEIDKTVRYAQMLEKAGCQLLTVHGRTKEQKGPMAGTASWEHIKAVRKAVGIPVFANGNIRCLQDVERCIQDTGVQGVMSAEGNLHNPALFEGRSPAVWELADEYLDIVRQHPCPLSYVRAHLFKLWHHTLQVHQQLREELAKVKTLEGVAAVSQALKLRCQEDMARQQEGVRPADNLPAFHWICQPYIRPGPKEGSKENSSGRSKRALEEEEGSMEGLSKNKLKKQLRNPHKTFDPSLKPKYAKCDQCGNPKGNRCVFNLCRGCCKKRAFRETADCPGHDCFLRPN.

FMN contacts are provided by residues P23–V25 and Q79. The Proton donor role is filled by C108. FMN is bound by residues K147, H175, N208 to N210, and A232 to E233. Residues G343 to D387 form a disordered region. Residues N373–H383 are compositionally biased toward basic residues.

The protein belongs to the Dus family. Dus1 subfamily. FMN serves as cofactor.

Its subcellular location is the cytoplasm. It is found in the nucleus. It carries out the reaction 5,6-dihydrouridine(16) in tRNA + NADP(+) = uridine(16) in tRNA + NADPH + H(+). The catalysed reaction is 5,6-dihydrouridine(16) in tRNA + NAD(+) = uridine(16) in tRNA + NADH + H(+). The enzyme catalyses 5,6-dihydrouridine(17) in tRNA + NAD(+) = uridine(17) in tRNA + NADH + H(+). It catalyses the reaction 5,6-dihydrouridine(17) in tRNA + NADP(+) = uridine(17) in tRNA + NADPH + H(+). Its function is as follows. Catalyzes the synthesis of dihydrouridine, a modified base found in the D-loop of most tRNAs. Specifically modifies U16 and U17 in cytoplasmic tRNAs. Affects the level of some mature tRNA and thereby the total cellular translation. The protein is tRNA-dihydrouridine(16/17) synthase [NAD(P)(+)]-like (Dus1l) of Rattus norvegicus (Rat).